Reading from the N-terminus, the 308-residue chain is Ava biosynthesis cluster protein O (308 aa).

Its pathway is secondary metabolite biosynthesis. Part of the cluster that mediates the biosynthesis of a highly modified cyclo-arginine-tryptophan dipeptide (cRW). The first step of the pathway is perfornmed by the arginine-containing cyclodipeptide synthase (RCPDS) avaA that acts as the scaffold-generating enzyme and is responsible for formation of the cyclo-Arg-Trp (cRW) diketopiperazine. AvaB then acts as a multifunctional flavoenzyme that is responsible for generating the cyclo-Arg-formylkynurenine DKP, which can be deformylated by avaC. AvaB then further catalyzes an additional N-oxidation followed by cyclization and dehydration. The next step is an N-acetylation of the guanidine group catalyzed by the arginine N-acetyltransferase avaD. The roles of the additional enzymes identified within the ava cluster still have to be determined. The protein is Ava biosynthesis cluster protein O of Aspergillus versicolor.